The sequence spans 509 residues: Photosystem II CP47 reaction center protein (509 aa).

Transmembrane regions (helical) follow at residues alanine 21 to serine 36, isoleucine 101 to tryptophan 115, glycine 140 to phenylalanine 156, isoleucine 203 to threonine 218, valine 237 to threonine 252, and asparagine 457 to arginine 472.

It belongs to the PsbB/PsbC family. PsbB subfamily. As to quaternary structure, PSII is composed of 1 copy each of membrane proteins PsbA, PsbB, PsbC, PsbD, PsbE, PsbF, PsbH, PsbI, PsbJ, PsbK, PsbL, PsbM, PsbT, PsbX, PsbY, PsbZ, Psb30/Ycf12, at least 3 peripheral proteins of the oxygen-evolving complex and a large number of cofactors. It forms dimeric complexes. Requires Binds multiple chlorophylls. PSII binds additional chlorophylls, carotenoids and specific lipids. as cofactor.

It is found in the plastid. The protein localises to the chloroplast thylakoid membrane. Functionally, one of the components of the core complex of photosystem II (PSII). It binds chlorophyll and helps catalyze the primary light-induced photochemical processes of PSII. PSII is a light-driven water:plastoquinone oxidoreductase, using light energy to abstract electrons from H(2)O, generating O(2) and a proton gradient subsequently used for ATP formation. This chain is Photosystem II CP47 reaction center protein, found in Pyropia yezoensis (Susabi-nori).